Here is a 376-residue protein sequence, read N- to C-terminus: MADYWKSQPKKFCDYCKCWIADNRPSVEFHERGKNHKENVARRISEIKQKSLDKAKEEEKASKEFAAMEAAALKAYQEDLKRLGLPLPSDISEPTVSPVISTVQPTPTSNQQKEKKKKKKKKEASKGGWVEGVTADGHCYYYDLITGASQWEKPEGFQGNLKKTAAKAVWVEGLSEDGYTYYYNTETGESKWEKPEDFIPHGGDVLSSKDSGKLPDTLEDAKSSDSHSDSEGEQKKAGEASTETKKLIIKFKEKNKSTEKRIGPEIQKEKSTPKQNPSNTNEEKPKTLKKSTNPYGEWQEIKQEAESQEEVDLELPSTEGECLSTSEAGVGEIKVVFKEKTVSSLGVAADGVAPVFKKRRLENGKSRNLRQRGDDE.

A Matrin-type zinc finger spans residues 11-42 (KFCDYCKCWIADNRPSVEFHERGKNHKENVAR). Positions 94 to 111 (PTVSPVISTVQPTPTSNQ) are enriched in polar residues. 2 disordered regions span residues 94–127 (PTVSPVISTVQPTPTSNQQKEKKKKKKKKEASKG) and 192–324 (WEKP…ECLS). The segment covering 114–123 (EKKKKKKKKE) has biased composition (basic residues). 2 consecutive WW domains span residues 123-156 (EASKGGWVEGVTADGHCYYYDLITGASQWEKPEG) and 164-197 (TAAKAVWVEGLSEDGYTYYYNTETGESKWEKPED). Residues 219 to 272 (EDAKSSDSHSDSEGEQKKAGEASTETKKLIIKFKEKNKSTEKRIGPEIQKEKST) show a composition bias toward basic and acidic residues. Phosphoserine occurs at positions 228 and 230. An interaction with SNRNP200 region spans residues 357-375 (KKRRLENGKSRNLRQRGDD).

Component of the spliceosome B complex. Associated with U2 snRNPs. Binds splicing factors SNRPB, SNRPC and SF1. Interacts via the WW domains with the Pro-rich domains of KHDRBS1/SAM68. Interacts via the WW domains with the Pro-rich domains of WBP11. Interacts with SNRNP200.

It localises to the nucleus. The protein localises to the nucleus speckle. Its function is as follows. Involved in pre-mRNA splicing as a component of the spliceosome. May play a role in cross-intron bridging of U1 and U2 snRNPs in the mammalian A complex. This chain is WW domain-binding protein 4 (Wbp4), found in Mus musculus (Mouse).